A 293-amino-acid polypeptide reads, in one-letter code: AKT-interacting protein homolog A (293 aa).

A compositionally biased stretch (polar residues) spans 1–11 (MNPFWNMSSAS). A disordered region spans residues 1–45 (MNPFWNMSSASVRKRSENDEKISTGDQKISPPRSSSAKKQLPPIP). Residues 14–23 (KRSENDEKIS) show a composition bias toward basic and acidic residues. Over residues 24-38 (TGDQKISPPRSSSAK) the composition is skewed to polar residues. A UBC core domain is found at 75 to 223 (YLEYSLLAEF…VVDSVKLCNS (149 aa)). Residues 256–266 (AQKKKSEEQSK) show a composition bias toward basic and acidic residues. The disordered stretch occupies residues 256-293 (AQKKKSEEQSKGLHVSGLSWVKPGSVLPFSKEENSLQT).

This sequence belongs to the ubiquitin-conjugating enzyme family. FTS subfamily.

The protein localises to the cytoplasm. Its subcellular location is the cell membrane. May function to promote vesicle trafficking and/or fusion. May also regulate apoptosis. The sequence is that of AKT-interacting protein homolog A (aktip-a) from Xenopus laevis (African clawed frog).